A 245-amino-acid chain; its full sequence is 1-(5-phosphoribosyl)-5-[(5-phosphoribosylamino)methylideneamino] imidazole-4-carboxamide isomerase (245 aa).

The active-site Proton acceptor is the Asp-8. Catalysis depends on Asp-129, which acts as the Proton donor.

The protein belongs to the HisA/HisF family.

The protein resides in the cytoplasm. It carries out the reaction 1-(5-phospho-beta-D-ribosyl)-5-[(5-phospho-beta-D-ribosylamino)methylideneamino]imidazole-4-carboxamide = 5-[(5-phospho-1-deoxy-D-ribulos-1-ylimino)methylamino]-1-(5-phospho-beta-D-ribosyl)imidazole-4-carboxamide. It functions in the pathway amino-acid biosynthesis; L-histidine biosynthesis; L-histidine from 5-phospho-alpha-D-ribose 1-diphosphate: step 4/9. The sequence is that of 1-(5-phosphoribosyl)-5-[(5-phosphoribosylamino)methylideneamino] imidazole-4-carboxamide isomerase from Geotalea uraniireducens (strain Rf4) (Geobacter uraniireducens).